We begin with the raw amino-acid sequence, 1211 residues long: DNA polymerase beta (1211 aa).

4 repeat units span residues 1074–1077 (KPAG), 1078–1081 (KPAG), 1082–1085 (NPAG), and 1086–1089 (NPAG). The 4 X 4 AA tandem repeats of [NK]-[P]-A-G stretch occupies residues 1074-1089 (KPAGKPAGNPAGNPAG).

The protein belongs to the DNA polymerase type-B family.

It carries out the reaction DNA(n) + a 2'-deoxyribonucleoside 5'-triphosphate = DNA(n+1) + diphosphate. Functionally, DNA-directed DNA polymerase involved in viral DNA replication. This is DNA polymerase beta (DPOL) from African swine fever virus (strain Badajoz 1971 Vero-adapted) (Ba71V).